A 562-amino-acid polypeptide reads, in one-letter code: Dihydroxy-acid dehydratase (562 aa).

Position 80 (aspartate 80) interacts with Mg(2+). A [2Fe-2S] cluster-binding site is contributed by cysteine 121. Aspartate 122 and lysine 123 together coordinate Mg(2+). Lysine 123 carries the N6-carboxylysine modification. Residue cysteine 194 participates in [2Fe-2S] cluster binding. Position 446 (glutamate 446) interacts with Mg(2+). Residue serine 472 is the Proton acceptor of the active site.

It belongs to the IlvD/Edd family. As to quaternary structure, homodimer. The cofactor is [2Fe-2S] cluster. Mg(2+) serves as cofactor.

It catalyses the reaction (2R)-2,3-dihydroxy-3-methylbutanoate = 3-methyl-2-oxobutanoate + H2O. The enzyme catalyses (2R,3R)-2,3-dihydroxy-3-methylpentanoate = (S)-3-methyl-2-oxopentanoate + H2O. It participates in amino-acid biosynthesis; L-isoleucine biosynthesis; L-isoleucine from 2-oxobutanoate: step 3/4. It functions in the pathway amino-acid biosynthesis; L-valine biosynthesis; L-valine from pyruvate: step 3/4. Functionally, functions in the biosynthesis of branched-chain amino acids. Catalyzes the dehydration of (2R,3R)-2,3-dihydroxy-3-methylpentanoate (2,3-dihydroxy-3-methylvalerate) into 2-oxo-3-methylpentanoate (2-oxo-3-methylvalerate) and of (2R)-2,3-dihydroxy-3-methylbutanoate (2,3-dihydroxyisovalerate) into 2-oxo-3-methylbutanoate (2-oxoisovalerate), the penultimate precursor to L-isoleucine and L-valine, respectively. In Staphylococcus aureus (strain bovine RF122 / ET3-1), this protein is Dihydroxy-acid dehydratase.